Reading from the N-terminus, the 174-residue chain is Translationally-controlled tumor protein homolog 1 (174 aa).

One can recognise a TCTP domain in the interval 1-174 (MRVFKDIVGY…FKDGLESVKY (174 aa)).

The protein belongs to the TCTP family.

It localises to the cytoplasm. Involved in calcium binding and microtubule stabilization. This chain is Translationally-controlled tumor protein homolog 1, found in Dictyostelium discoideum (Social amoeba).